Consider the following 197-residue polypeptide: dTTP/UTP pyrophosphatase (197 aa).

Catalysis depends on D70, which acts as the Proton acceptor.

Belongs to the Maf family. YhdE subfamily. A divalent metal cation serves as cofactor.

It is found in the cytoplasm. The catalysed reaction is dTTP + H2O = dTMP + diphosphate + H(+). The enzyme catalyses UTP + H2O = UMP + diphosphate + H(+). Nucleoside triphosphate pyrophosphatase that hydrolyzes dTTP and UTP. May have a dual role in cell division arrest and in preventing the incorporation of modified nucleotides into cellular nucleic acids. The protein is dTTP/UTP pyrophosphatase (yceF2) of Salmonella choleraesuis (strain SC-B67).